A 276-amino-acid polypeptide reads, in one-letter code: NH(3)-dependent NAD(+) synthetase (276 aa).

46 to 53 (GISGGQDS) is an ATP binding site. Position 52 (Asp-52) interacts with Mg(2+). Position 141 (Arg-141) interacts with deamido-NAD(+). ATP is bound at residue Thr-161. Residue Glu-166 participates in Mg(2+) binding. Deamido-NAD(+)-binding residues include Lys-174 and Asp-181. ATP contacts are provided by Lys-190 and Thr-212. Residue 261–262 (HK) coordinates deamido-NAD(+).

This sequence belongs to the NAD synthetase family. Homodimer.

The enzyme catalyses deamido-NAD(+) + NH4(+) + ATP = AMP + diphosphate + NAD(+) + H(+). The protein operates within cofactor biosynthesis; NAD(+) biosynthesis; NAD(+) from deamido-NAD(+) (ammonia route): step 1/1. In terms of biological role, catalyzes the ATP-dependent amidation of deamido-NAD to form NAD. Uses ammonia as a nitrogen source. This Limosilactobacillus fermentum (strain NBRC 3956 / LMG 18251) (Lactobacillus fermentum) protein is NH(3)-dependent NAD(+) synthetase.